A 118-amino-acid polypeptide reads, in one-letter code: Large ribosomal subunit protein bL20 (118 aa).

This sequence belongs to the bacterial ribosomal protein bL20 family.

Binds directly to 23S ribosomal RNA and is necessary for the in vitro assembly process of the 50S ribosomal subunit. It is not involved in the protein synthesizing functions of that subunit. This chain is Large ribosomal subunit protein bL20, found in Bacillus anthracis (strain CDC 684 / NRRL 3495).